The sequence spans 306 residues: Pantothenate kinase (306 aa).

90 to 97 (GSVAVGKS) contributes to the ATP binding site.

The protein belongs to the prokaryotic pantothenate kinase family.

Its subcellular location is the cytoplasm. The catalysed reaction is (R)-pantothenate + ATP = (R)-4'-phosphopantothenate + ADP + H(+). It functions in the pathway cofactor biosynthesis; coenzyme A biosynthesis; CoA from (R)-pantothenate: step 1/5. This Lactococcus lactis subsp. cremoris (strain SK11) protein is Pantothenate kinase.